Reading from the N-terminus, the 1178-residue chain is DNA-directed RNA polymerase subunit beta' (1178 aa).

Zn(2+) contacts are provided by C60, C62, C75, and C78. Mg(2+) is bound by residues D450, D452, and D454. 4 residues coordinate Zn(2+): C795, C869, C876, and C879.

It belongs to the RNA polymerase beta' chain family. The RNAP catalytic core consists of 2 alpha, 1 beta, 1 beta' and 1 omega subunit. When a sigma factor is associated with the core the holoenzyme is formed, which can initiate transcription. It depends on Mg(2+) as a cofactor. The cofactor is Zn(2+).

It catalyses the reaction RNA(n) + a ribonucleoside 5'-triphosphate = RNA(n+1) + diphosphate. DNA-dependent RNA polymerase catalyzes the transcription of DNA into RNA using the four ribonucleoside triphosphates as substrates. The polypeptide is DNA-directed RNA polymerase subunit beta' (Clostridium botulinum (strain Langeland / NCTC 10281 / Type F)).